Here is a 37-residue protein sequence, read N- to C-terminus: Cytochrome b6-f complex subunit 5 (37 aa).

The chain crosses the membrane as a helical span at residues 5-25; that stretch reads LLSGIVLGLIPITLAGLFVTA.

It belongs to the PetG family. As to quaternary structure, the 4 large subunits of the cytochrome b6-f complex are cytochrome b6, subunit IV (17 kDa polypeptide, PetD), cytochrome f and the Rieske protein, while the 4 small subunits are PetG, PetL, PetM and PetN. The complex functions as a dimer.

It is found in the plastid. Its subcellular location is the chloroplast thylakoid membrane. Functionally, component of the cytochrome b6-f complex, which mediates electron transfer between photosystem II (PSII) and photosystem I (PSI), cyclic electron flow around PSI, and state transitions. PetG is required for either the stability or assembly of the cytochrome b6-f complex. The protein is Cytochrome b6-f complex subunit 5 of Chaetosphaeridium globosum (Charophycean green alga).